Here is a 412-residue protein sequence, read N- to C-terminus: Alpha-2,8-sialyltransferase 8E (412 aa).

Residues 1–16 (MRYADPSANRDLLGNR) are Cytoplasmic-facing. A helical; Signal-anchor for type II membrane protein transmembrane segment spans residues 17-37 (TLLFIFICAFALVTLLQQILY). At 38 to 412 (SKSYIKRGFQ…RVHTGTCNCC (375 aa)) the chain is on the lumenal side. N-linked (GlcNAc...) asparagine glycans are attached at residues asparagine 58, asparagine 64, asparagine 73, and asparagine 92. 2 disulfides stabilise this stretch: cysteine 200-cysteine 349 and cysteine 214-cysteine 409. Substrate is bound by residues asparagine 228 and 250–252 (NPS). A glycan (N-linked (GlcNAc...) asparagine) is linked at asparagine 277. 336-338 (STG) contributes to the substrate binding site. The active-site Proton donor/acceptor is the histidine 384.

This sequence belongs to the glycosyltransferase 29 family. As to expression, highly expressed in brain. Expressed at low levels in other tissues, including liver, testis, lung, placenta and spleen.

Its subcellular location is the golgi apparatus membrane. The enzyme catalyses a ganglioside GT1b (d18:1(4E)) + CMP-N-acetyl-beta-neuraminate = a ganglioside GQ1b (d18:1(4E)) + CMP + H(+). The catalysed reaction is a ganglioside GD3 (d18:1(4E)) + CMP-N-acetyl-beta-neuraminate = a ganglioside GT3 (d18:1(4E)) + CMP + H(+). It carries out the reaction a ganglioside GD1a (d18:1(4E)) + CMP-N-acetyl-beta-neuraminate = a ganglioside GT1a (d18:1(4E)) + CMP + H(+). It catalyses the reaction a ganglioside GM1b (d18:1(4E)) + CMP-N-acetyl-beta-neuraminate = a ganglioside GD1c (d18:1(4E)) + CMP + H(+). The enzyme catalyses a ganglioside GQ1c (d18:1(4E)) + CMP-N-acetyl-beta-neuraminate = a ganglioside GP1c (d18:1(4E)) + CMP + H(+). It functions in the pathway protein modification; protein glycosylation. Its function is as follows. Involved in the synthesis of gangliosides GD1c, GT1a, GQ1b, GP1c and GT3 from GD1a, GT1b, GM1b and GD3 respectively. This chain is Alpha-2,8-sialyltransferase 8E, found in Mus musculus (Mouse).